The primary structure comprises 957 residues: ERC protein 2 (957 aa).

The span at 1–13 (MYGSARTISNPEG) shows a compositional bias: polar residues. Residues 1 to 44 (MYGSARTISNPEGSPSRSPRLPRSPRLGHRRTSSGGGGGTGKTL) form a disordered region. The span at 14 to 25 (SPSRSPRLPRSP) shows a compositional bias: low complexity. Phosphoserine occurs at positions 65 and 666. A coiled-coil region spans residues 140–917 (RQVRDSTMLD…RMKLMADNYD (778 aa)). Residues 760 to 957 (DQNKKVANLK…DQDDEEGIWA (198 aa)) are involved in binding to RIMS1. The tract at residues 918–957 (DDHHHYHHHHHHHHHRSPGRSQHSNHRPSPDQDDEEGIWA) is disordered. Positions 922–943 (HYHHHHHHHHHRSPGRSQHSNH) are enriched in basic residues. A compositionally biased stretch (acidic residues) spans 948–957 (DQDDEEGIWA).

As to quaternary structure, interacts with BSN, ERC1, PPFIA1, PPFIA2, PPFIA3 and PPFIA4. Interacts through its C-terminus with the PDZ domain of RIMS1. Part of a complex consisting of ERC2, RIMS1 and UNC13A. As to expression, predominantly expressed in brain, including hippocampus, cortex, cerebellum, amygdala and olfactory bulb.

The protein resides in the cytoplasm. The protein localises to the synapse. It localises to the presynaptic active zone. Its subcellular location is the cytoskeleton. Its function is as follows. Thought to be involved in the organization of the cytomatrix at the nerve terminals active zone (CAZ) which regulates neurotransmitter release. Seems to act together with BSN. May recruit liprin-alpha proteins to the CAZ. The polypeptide is ERC protein 2 (Erc2) (Rattus norvegicus (Rat)).